The following is a 626-amino-acid chain: DNA (cytosine-5)-methyltransferase DRM2 (626 aa).

UBA domains lie at Gly59 to Tyr101 and Ser109 to Cys150. Residues Val160–Lys187 show a composition bias toward acidic residues. Disordered stretches follow at residues Val160–Ser196 and Thr245–Met282. The UBA 3 domain maps to Asn190 to Cys232. The span at Glu262–Ile276 shows a compositional bias: basic and acidic residues. Positions Thr295 to Ser626 constitute an SAM-dependent MTase DRM-type domain.

It belongs to the class I-like SAM-binding methyltransferase superfamily. DRM-methyltransferase family. Interacts with RDM1. Expressed in roots, inflorescences and at lower levels in leaves.

It is found in the nucleus. The protein resides in the nucleoplasm. It carries out the reaction a 2'-deoxycytidine in DNA + S-adenosyl-L-methionine = a 5-methyl-2'-deoxycytidine in DNA + S-adenosyl-L-homocysteine + H(+). Its function is as follows. Involved in de novo DNA methylation. Controls asymmetric and CpNpG methylation. Required for FWA gene silencing but not for the maintenance of SUP gene silencing. Functionally redundant to CMT3 to maintain non-CpG methylation. Involved in RNA-directed DNA methylation (RdDM). Acts as major DNA methyltransferase in the RdDM pathway, and is essential for RNA-directed de novo DNA methylation of cytosines in all sequence contexts. Associates with long non-coding RNA (lncRNA) produced by RNA polymerase V (Pol V). This association is dependent on AGO4 and IDN2, and results in DNA methylation of RdDM target loci. This chain is DNA (cytosine-5)-methyltransferase DRM2 (DRM2), found in Arabidopsis thaliana (Mouse-ear cress).